The sequence spans 590 residues: Nuclear receptor subfamily 2 group C member 1 (590 aa).

Positions 1–166 (MATIEEIAHQ…RLQRCIAFGM (166 aa)) are required for interaction with KAT2B. The nuclear receptor DNA-binding region spans 98 to 173 (FDLCVVCGDK…FGMKQDSVQC (76 aa)). 2 NR C4-type zinc fingers span residues 101-121 (CVVCGDKASGRHYGAITCEGC) and 137-156 (CRGSKDCIINKHHRNRCQYC). Phosphoserine occurs at positions 185 and 203. The residue at position 208 (Thr-208) is a Phosphothreonine. Thr-210 carries the post-translational modification Phosphothreonine; by MAPK1. Lys-238 participates in a covalent cross-link: Glycyl lysine isopeptide (Lys-Gly) (interchain with G-Cter in SUMO); alternate. Residue Lys-238 forms a Glycyl lysine isopeptide (Lys-Gly) (interchain with G-Cter in SUMO2); alternate linkage. The NR LBD domain maps to 333–577 (ESMEGSTHLI…SVIPHILKME (245 aa)). Ser-568 bears the Phosphoserine; by PKC mark. Positions 571-590 (PHILKMEPADYNSQIIGHSL) are required for interaction with NRIP1. Lys-575 participates in a covalent cross-link: Glycyl lysine isopeptide (Lys-Gly) (interchain with G-Cter in SUMO2).

It belongs to the nuclear hormone receptor family. NR2 subfamily. In terms of assembly, homodimer. Heterodimer; with NR2C2 which is required for chromatin remodeling and for binding to promoter regions such as globin DR1 repeats. Interacts with ESR1; the interaction prevents homodimerization of ESR1 and suppresses its transcriptional activity and cell growth. Interacts with NRIP1 (via its LXXLL motifs); the interaction provides corepressor activity. Interacts with HDAC3 (via the DNA-binding domain); the interaction recruits phosphorylated NR2C1 to PML bodies for sumoylation. Interacts with HDAC4 (via the DNA-binding domain). Interacts with PIAS1; the interaction is required for sumoylation of NR2C1. Interacts with UBE2I; the interaction is required for sumoylation of NR2C1. Interacts with KAT2B; the interaction acts as a corepressor of gene expression. In terms of processing, sumoylation requires both PIAS1 and UBE2I. Sumoylation appears to dissociate NR2C1 from the PML nuclear bodies. Enhances the interaction with NRIP1 but inhibits interaction with KAT2B. In proliferating cells, stimulation by all-trans retinoic acid, activation of MAPK1-mediated phosphorylation and recruitment to PML bodies with subsequent sumoylation, suppresses OCT4 expression. Phosphorylated on several serine and threonine residues. Phosphorylation on Thr-210, stimulated by all-trans retinoic acid (atRA) mediates PML location and sumoylation in proliferating cells which then modulates its association with effector molecules, KAT2B and NRIP1. Phosphorylation on Ser-568 by PKC is important for protein stability and function as activator of RARB.

It is found in the nucleus. Its subcellular location is the PML body. Functionally, orphan nuclear receptor. Binds the IR7 element in the promoter of its own gene in an autoregulatory negative feedback mechanism. Primarily repressor of a broad range of genes including ESR1 and RARB. Together with NR2C2, forms the core of the DRED (direct repeat erythroid-definitive) complex that represses embryonic and fetal globin transcription. Binds to hormone response elements (HREs) consisting of two 5'-AGGTCA-3' half site direct repeat consensus sequences. Also activator of OCT4 gene expression. Plays a fundamental role in early embryogenesis and regulates embryonic stem cell proliferation and differentiation. Mediator of retinoic acid-regulated preadipocyte proliferation. In Rattus norvegicus (Rat), this protein is Nuclear receptor subfamily 2 group C member 1 (Nr2c1).